The chain runs to 61 residues: UPF0434 protein TM1040_0056 (61 aa).

It belongs to the UPF0434 family.

In Ruegeria sp. (strain TM1040) (Silicibacter sp.), this protein is UPF0434 protein TM1040_0056.